A 255-amino-acid chain; its full sequence is tRNA1(Val) (adenine(37)-N6)-methyltransferase (255 aa).

It belongs to the methyltransferase superfamily. tRNA (adenine-N(6)-)-methyltransferase family.

The protein localises to the cytoplasm. The catalysed reaction is adenosine(37) in tRNA1(Val) + S-adenosyl-L-methionine = N(6)-methyladenosine(37) in tRNA1(Val) + S-adenosyl-L-homocysteine + H(+). Functionally, specifically methylates the adenine in position 37 of tRNA(1)(Val) (anticodon cmo5UAC). This Porphyromonas gingivalis (strain ATCC BAA-308 / W83) protein is tRNA1(Val) (adenine(37)-N6)-methyltransferase.